The sequence spans 416 residues: Serine hydroxymethyltransferase (416 aa).

Residues leucine 118 and 122–124 (GHL) contribute to the (6S)-5,6,7,8-tetrahydrofolate site. At lysine 226 the chain carries N6-(pyridoxal phosphate)lysine. Residues glutamate 242 and 350 to 352 (SPF) contribute to the (6S)-5,6,7,8-tetrahydrofolate site.

Belongs to the SHMT family. As to quaternary structure, homodimer. Pyridoxal 5'-phosphate serves as cofactor.

The protein localises to the cytoplasm. It catalyses the reaction (6R)-5,10-methylene-5,6,7,8-tetrahydrofolate + glycine + H2O = (6S)-5,6,7,8-tetrahydrofolate + L-serine. The protein operates within one-carbon metabolism; tetrahydrofolate interconversion. It functions in the pathway amino-acid biosynthesis; glycine biosynthesis; glycine from L-serine: step 1/1. Catalyzes the reversible interconversion of serine and glycine with tetrahydrofolate (THF) serving as the one-carbon carrier. This reaction serves as the major source of one-carbon groups required for the biosynthesis of purines, thymidylate, methionine, and other important biomolecules. Also exhibits THF-independent aldolase activity toward beta-hydroxyamino acids, producing glycine and aldehydes, via a retro-aldol mechanism. The protein is Serine hydroxymethyltransferase of Helicobacter pylori (strain G27).